Consider the following 406-residue polypeptide: Phosphoglycerate kinase (406 aa).

Substrate contacts are provided by residues 23–25, Arg-38, 61–64, Arg-117, and Arg-157; these read DIN and HQGR. ATP-binding positions include Glu-331 and 357–360; that span reads GGHI.

Belongs to the phosphoglycerate kinase family. In terms of assembly, monomer.

It localises to the cytoplasm. The catalysed reaction is (2R)-3-phosphoglycerate + ATP = (2R)-3-phospho-glyceroyl phosphate + ADP. It participates in carbohydrate degradation; glycolysis; pyruvate from D-glyceraldehyde 3-phosphate: step 2/5. This Methanopyrus kandleri (strain AV19 / DSM 6324 / JCM 9639 / NBRC 100938) protein is Phosphoglycerate kinase.